We begin with the raw amino-acid sequence, 431 residues long: 5-methylthioadenosine/S-adenosylhomocysteine deaminase (431 aa).

Zn(2+) is bound by residues histidine 68 and histidine 70. Positions 97 and 186 each coordinate substrate. Histidine 213 is a Zn(2+) binding site. Substrate contacts are provided by glutamate 216 and aspartate 301. Aspartate 301 is a Zn(2+) binding site.

Belongs to the metallo-dependent hydrolases superfamily. MTA/SAH deaminase family. The cofactor is Zn(2+).

The catalysed reaction is S-adenosyl-L-homocysteine + H2O + H(+) = S-inosyl-L-homocysteine + NH4(+). It catalyses the reaction S-methyl-5'-thioadenosine + H2O + H(+) = S-methyl-5'-thioinosine + NH4(+). Catalyzes the deamination of 5-methylthioadenosine and S-adenosyl-L-homocysteine into 5-methylthioinosine and S-inosyl-L-homocysteine, respectively. Is also able to deaminate adenosine. This is 5-methylthioadenosine/S-adenosylhomocysteine deaminase from Halothermothrix orenii (strain H 168 / OCM 544 / DSM 9562).